The primary structure comprises 476 residues: Serine/threonine-protein kinase chk-2 (476 aa).

The 62-residue stretch at 66–127 (FVCGRGSDDA…NGTLVNQEMI (62 aa)) folds into the FHA domain. The Protein kinase domain occupies 170–436 (HVTSHSLGKG…AVELMSTQWM (267 aa)). Residues 177–184 (GKGGFGKV), Lys-199, and 252–258 (EYVGGGE) contribute to the ATP site. Asp-301 (proton acceptor) is an active-site residue. ATP is bound by residues 305–306 (EN) and Asp-322.

It belongs to the protein kinase superfamily. CAMK Ser/Thr protein kinase family. CHK2 subfamily. Mg(2+) is required as a cofactor. Highly expressed in germline tissue.

Its subcellular location is the nucleus. The catalysed reaction is L-seryl-[protein] + ATP = O-phospho-L-seryl-[protein] + ADP + H(+). The enzyme catalyses L-threonyl-[protein] + ATP = O-phospho-L-threonyl-[protein] + ADP + H(+). Serine/threonine-protein kinase which is required for checkpoint-mediated cell cycle arrest, activation of DNA repair and apoptosis in response to the presence of DNA double-strand breaks. May also negatively regulate cell cycle progression during unperturbed cell cycles. Phosphorylates and inhibits cdc25 phosphatase, preventing entry into mitosis. Required for nuclear reorganization and homologous chromosome pairing during meiotic prophase. In Caenorhabditis elegans, this protein is Serine/threonine-protein kinase chk-2 (chk-2).